Consider the following 114-residue polypeptide: DNA-directed RNA polymerase subunit Rpo4 (114 aa).

This sequence belongs to the eukaryotic RPB4 RNA polymerase subunit family. Part of the 13-subunit RNA polymerase complex. Forms a stalk with Rpo7 that extends from the main structure. Post-translationally, in purified enzyme appears as 5 forms, each differing by about 200 Da of a covalently bound, negatively charged residue. Not glycosylated.

It localises to the cytoplasm. It carries out the reaction RNA(n) + a ribonucleoside 5'-triphosphate = RNA(n+1) + diphosphate. In terms of biological role, DNA-dependent RNA polymerase catalyzes the transcription of DNA into RNA using the four ribonucleoside triphosphates as substrates. This subunit is less well bound than the others. Probably not involved in transcription initiation. The polypeptide is DNA-directed RNA polymerase subunit Rpo4 (Sulfolobus acidocaldarius (strain ATCC 33909 / DSM 639 / JCM 8929 / NBRC 15157 / NCIMB 11770)).